The primary structure comprises 165 residues: Neurotrophin-3 (165 aa).

Positions 1 to 3 (IQS) are cleaved as a signal peptide. Residues 4–119 (TSMDQGSLTE…VLNRTSRRKR (116 aa)) constitute a propeptide that is removed on maturation. Asn-112 carries N-linked (GlcNAc...) asparagine glycosylation.

Belongs to the NGF-beta family.

It localises to the secreted. In terms of biological role, seems to promote the survival of visceral and proprioceptive sensory neurons. This Calabaria reinhardtii (Calabar boa) protein is Neurotrophin-3 (NTF3).